The primary structure comprises 408 residues: Probable acyl-CoA dehydrogenase 6 (408 aa).

The Proton acceptor role is filled by E265.

This sequence belongs to the acyl-CoA dehydrogenase family. In terms of assembly, homotetramer. The cofactor is FAD.

It carries out the reaction 3-methylbutanoyl-CoA + oxidized [electron-transfer flavoprotein] + H(+) = 3-methylbut-2-enoyl-CoA + reduced [electron-transfer flavoprotein]. It functions in the pathway amino-acid degradation; L-leucine degradation; (S)-3-hydroxy-3-methylglutaryl-CoA from 3-isovaleryl-CoA: step 1/3. The chain is Probable acyl-CoA dehydrogenase 6 (acdh-6) from Caenorhabditis elegans.